The following is a 447-amino-acid chain: Voltage-gated purine nucleotide uniporter SLC17A9 (447 aa).

Residues 1–26 form a disordered region; that stretch reads MPSQRSSLMQPIPEETRKTPSAAAED. Transmembrane regions (helical) follow at residues 40–60, 74–94, 103–123, 129–149, 169–189, 192–212, 252–272, 287–307, 327–347, 380–400, and 413–433; these read ILLL…VCTV, GIVL…GGHL, VILL…LLAH, LAFL…YFPA, TVGA…SVLL, CGWQ…AYYV, VWAA…LLSW, WVFN…SGFI, VMGL…TSFL, GFLF…GVCL, and CVFH…LVFG.

This sequence belongs to the major facilitator superfamily. Sodium/anion cotransporter family. In brain, specifically expressed in the medulla and is associated with chromaffin granules (at protein level). Predominantly expressed in adrenal gland, brain and thyroid.

It localises to the cytoplasmic vesicle. It is found in the secretory vesicle. The protein resides in the chromaffin granule membrane. The protein localises to the secretory vesicle membrane. Its subcellular location is the lysosome membrane. It catalyses the reaction ATP(in) = ATP(out). It carries out the reaction ADP(in) = ADP(out). The catalysed reaction is GTP(in) = GTP(out). Activity is chloride-dependent. In terms of biological role, voltage-gated ATP nucleotide uniporter that can also transport the purine nucleotides ADP and GTP. Uses the membrane potential as the driving force to control ATP accumulation in lysosomes and secretory vesicles. By controlling ATP storage in lysosomes, regulates ATP-dependent proteins of these organelles. Also indirectly regulates the exocytosis of ATP through its import into lysosomes in astrocytes and secretory vesicles such as adrenal chromaffin granules, mucin granules and synaptic vesicles. The polypeptide is Voltage-gated purine nucleotide uniporter SLC17A9 (Mus musculus (Mouse)).